Consider the following 274-residue polypeptide: Large ribosomal subunit protein uL2 (274 aa).

Residues 221 to 274 form a disordered region; it reads RGTAMNPVDHPHGGGEGRNFGKHPVTPWGVQTKGKKTRSNKRTDKFIVRRRSKK.

It belongs to the universal ribosomal protein uL2 family. As to quaternary structure, part of the 50S ribosomal subunit. Forms a bridge to the 30S subunit in the 70S ribosome.

Its function is as follows. One of the primary rRNA binding proteins. Required for association of the 30S and 50S subunits to form the 70S ribosome, for tRNA binding and peptide bond formation. It has been suggested to have peptidyltransferase activity; this is somewhat controversial. Makes several contacts with the 16S rRNA in the 70S ribosome. The protein is Large ribosomal subunit protein uL2 of Yersinia enterocolitica.